We begin with the raw amino-acid sequence, 305 residues long: tRNA uridine(34) hydroxylase (305 aa).

A Rhodanese domain is found at 125-219 (ADENTVVVDT…YLEEVPREQS (95 aa)). Cysteine 179 functions as the Cysteine persulfide intermediate in the catalytic mechanism.

Belongs to the TrhO family.

The catalysed reaction is uridine(34) in tRNA + AH2 + O2 = 5-hydroxyuridine(34) in tRNA + A + H2O. Functionally, catalyzes oxygen-dependent 5-hydroxyuridine (ho5U) modification at position 34 in tRNAs. The sequence is that of tRNA uridine(34) hydroxylase from Brucella suis (strain ATCC 23445 / NCTC 10510).